Here is an 89-residue protein sequence, read N- to C-terminus: Large ribosomal subunit protein bL31B (89 aa).

The protein belongs to the bacterial ribosomal protein bL31 family. Type B subfamily. As to quaternary structure, part of the 50S ribosomal subunit.

The sequence is that of Large ribosomal subunit protein bL31B from Actinobacillus pleuropneumoniae serotype 5b (strain L20).